A 218-amino-acid chain; its full sequence is Small ribosomal subunit protein uS3c (218 aa).

The region spanning 47–118 (VQKNIRISSG…KLNIAITRIS (72 aa)) is the KH type-2 domain.

The protein belongs to the universal ribosomal protein uS3 family. Part of the 30S ribosomal subunit.

The protein resides in the plastid. It is found in the chloroplast. In Nasturtium officinale (Watercress), this protein is Small ribosomal subunit protein uS3c (rps3).